We begin with the raw amino-acid sequence, 303 residues long: Ferrochelatase (303 aa).

2 residues coordinate Fe cation: histidine 185 and glutamate 262.

Belongs to the ferrochelatase family.

It is found in the cytoplasm. It carries out the reaction heme b + 2 H(+) = protoporphyrin IX + Fe(2+). It functions in the pathway porphyrin-containing compound metabolism; protoheme biosynthesis; protoheme from protoporphyrin-IX: step 1/1. In terms of biological role, catalyzes the ferrous insertion into protoporphyrin IX. The protein is Ferrochelatase of Campylobacter jejuni (strain RM1221).